We begin with the raw amino-acid sequence, 493 residues long: Proline--tRNA ligase (493 aa).

The protein belongs to the class-II aminoacyl-tRNA synthetase family. ProS type 3 subfamily. In terms of assembly, homodimer.

The protein resides in the cytoplasm. The enzyme catalyses tRNA(Pro) + L-proline + ATP = L-prolyl-tRNA(Pro) + AMP + diphosphate. Its function is as follows. Catalyzes the attachment of proline to tRNA(Pro) in a two-step reaction: proline is first activated by ATP to form Pro-AMP and then transferred to the acceptor end of tRNA(Pro). The protein is Proline--tRNA ligase of Porphyromonas gingivalis (strain ATCC BAA-308 / W83).